A 135-amino-acid chain; its full sequence is MGLTYQLIPVLVCLLVCTSHFVHGHKCDITLAEIIKTLNILTTRKNSCMELPVADVFAAPKNTTEKETFCRVGIELRRIYRSHTCLNKFLGGLDRNLNSLASKTCSVNEAKTSTSTLKDLLERLKTIMKEKYSKC.

The first 24 residues, 1–24 (MGLTYQLIPVLVCLLVCTSHFVHG), serve as a signal peptide directing secretion. Disulfide bonds link Cys27–Cys135, Cys48–Cys85, and Cys70–Cys105. A glycan (N-linked (GlcNAc...) asparagine) is linked at Asn62.

This sequence belongs to the IL-4/IL-13 family.

The protein localises to the secreted. In terms of biological role, participates in at least several B-cell activation processes as well as of other cell types. It is a costimulator of DNA-synthesis. It induces the expression of class II MHC molecules on resting B-cells. It enhances both secretion and cell surface expression of IgE and IgG1. It also regulates the expression of the low affinity Fc receptor for IgE (CD23) on both lymphocytes and monocytes. Positively regulates IL31RA expression in macrophages. Stimulates autophagy in dendritic cells by interfering with mTORC1 signaling and through the induction of RUFY4. The protein is Interleukin-4 (IL4) of Bubalus carabanensis (Swamp type water buffalo).